The following is a 594-amino-acid chain: MSLRFNLIVTPFSNYEIRNRRETFPVQKFLMTTSKSAIKVKCSLKTSIDLVGKIREKINGKVDNSLEVPTINYLVDIPSNLCMIDSLERLGVARYFQSEIDGVLEKTYRLWQQREKDIFADVTCRAMAFRFLRVKGYEVSSDELAPYADQVHVNPQISDVTTVVELYRASQVRIYEEDSILEKLHAWTSTFLKQQLQSKTISDKKLHEQVEYYLKNYHGIQNQVAVRRSLDLYDIDHYPILKVADRFRIIYNEDFFVFLRQDFNLCQAQHQKELQQLQRWYEDCRLDTLNYGRNVVHVSCFLAAANFGDPELSNARLAFAKTIVLVTRIDDFFDLAGSREESYKILELVKEWKEKPTEDYGSKEVEILFTALYDTVNEFAEIAYIEQGRCVKPLLIKLWVELLTSFKKELDSWTDDTALTLDEYLSSAWMSIACRVCTLTALQFLGVKLSEEMLSSQECTDLCRHLSFVNRLLNDVQTFERERKENTINAVSVLLAAHRHERAITEEEAISKIQEIVEQNRRKLMRMVYQRESVFPRKCRNVFLEVSKMGHYLYASGDELTTPQQLMEDMKSLVFEPLALHPLETNNVIASGKN.

Mg(2+) contacts are provided by Asp330, Asp334, Asn474, Gln477, and Glu482. Positions 330 to 334 (DDFFD) match the DDXXD motif motif.

Belongs to the terpene synthase family. Mg(2+) is required as a cofactor. In terms of tissue distribution, mostly expressed in trichomes of leaves and fruits.

The protein localises to the plastid. It is found in the chloroplast. The catalysed reaction is peregrinol diphosphate = labd-13(16),14-diene-9-ol + diphosphate. It carries out the reaction 9alpha-copalyl diphosphate = syn-isopimara-7,15-diene + diphosphate. It participates in secondary metabolite biosynthesis; terpenoid biosynthesis. In terms of biological role, involved in the biosynthesis of labdane-type diterpenoid including cleroda-dienols, and peregrinol lactones and furan derivatives, dopaminergic diterpenoids that can bind to dopamine receptors in the human pituitary gland, have probably ability to lower prolactin levels, and are used to treat menstrual cycle disorders (e.g. premenstrual syndrome and mastodynia). Terpene synthase the catalyzes the conversion of peregrinol diphosphate to labda-13(16),14-dien-9-ol, and of syn-copalyl diphosophate to dehydroabietadiene and syn-isopimara-7,15-diene. The chain is Class I diterpene synthase TPS6, chloroplastic from Vitex agnus-castus (Chaste tree).